Consider the following 186-residue polypeptide: Adrenodoxin, mitochondrial (186 aa).

Residues 1–58 (MAARLLRVASAALGDTAGRWRLLARPRAGAGGLRGSRGPGLGGGAVATRTLSVSGRAQ) constitute a mitochondrion transit peptide. S61 bears the Phosphoserine mark. N6-acetyllysine; alternate is present on K64. Residue K64 is modified to N6-succinyllysine; alternate. One can recognise a 2Fe-2S ferredoxin-type domain in the interval 65 to 169 (ITVHFINRDG…NMTVRVPDAV (105 aa)). [2Fe-2S] cluster contacts are provided by C104, C110, C113, and C150. Residue K156 is modified to N6-succinyllysine. S175 carries the phosphoserine modification.

It belongs to the adrenodoxin/putidaredoxin family. In terms of assembly, interacts with CYP11A1. It depends on [2Fe-2S] cluster as a cofactor. In terms of tissue distribution, detected in adrenal cortex and corpus luteum (at protein level).

It is found in the mitochondrion matrix. Its function is as follows. Essential for the synthesis of various steroid hormones. Participates in the reduction of mitochondrial cytochrome P450 for steroidogenesis. Transfers electrons from adrenodoxin reductase to CYP11A1, a cytochrome P450 that catalyzes cholesterol side-chain cleavage to produce pregnenolone, the precursor of most steroid hormones. Does not form a ternary complex with adrenodoxin reductase and CYP11A1 but shuttles between the two enzymes to transfer electrons. In Bos taurus (Bovine), this protein is Adrenodoxin, mitochondrial (FDX1).